A 278-amino-acid chain; its full sequence is S-formylglutathione hydrolase YeiG (278 aa).

Active-site charge relay system residues include Ser-145, Asp-223, and His-256.

Belongs to the esterase D family.

It carries out the reaction S-formylglutathione + H2O = formate + glutathione + H(+). Functionally, serine hydrolase involved in the detoxification of formaldehyde. Hydrolyzes S-formylglutathione to glutathione and formate. This chain is S-formylglutathione hydrolase YeiG (yeiG), found in Escherichia coli O157:H7.